We begin with the raw amino-acid sequence, 105 residues long: Small ribosomal subunit protein uS10 (105 aa).

It belongs to the universal ribosomal protein uS10 family. In terms of assembly, part of the 30S ribosomal subunit.

In terms of biological role, involved in the binding of tRNA to the ribosomes. This is Small ribosomal subunit protein uS10 from Cyanothece sp. (strain PCC 7425 / ATCC 29141).